We begin with the raw amino-acid sequence, 313 residues long: Small ribosomal subunit protein uS2 (313 aa).

The span at 228–256 shows a compositional bias: basic and acidic residues; that stretch reads RQEDKAAEAQDKDAQDTEDNKGARPRGAE. A disordered region spans residues 228–313; the sequence is RQEDKAAEAQ…VSKAGDKPKK (86 aa).

It belongs to the universal ribosomal protein uS2 family.

The polypeptide is Small ribosomal subunit protein uS2 (Amoebophilus asiaticus (strain 5a2)).